An 857-amino-acid chain; its full sequence is A-kinase anchor protein 1, mitochondrial (857 aa).

A mitochondrion-targeting transit peptide spans 1–29; that stretch reads MAIQLRSLFPLALPGMLALLGWWWFFSRK. Ser55 bears the Phosphoserine mark. Residues 65–121 form a disordered region; it reads VAPTVTQPPGREEQRCVDKPSTEPLALPRTRQVRRRSESSGNLPSVADTRSQPGPCR. A compositionally biased stretch (basic and acidic residues) spans 74–85; the sequence is GREEQRCVDKPS. Ser101, Ser103, and Ser164 each carry phosphoserine. Residues 103–116 show a composition bias toward polar residues; it reads SSGNLPSVADTRSQ. Disordered regions lie at residues 165–198 and 260–303; these read ALGK…GDAV and FVEP…VPEN. Over residues 286–299 the composition is skewed to basic and acidic residues; it reads SDRDLAGELDKDET. Positions 306 to 319 are PKA-RII subunit binding domain; sequence IKQAAFQLISQVIL. Disordered stretches follow at residues 336–437, 466–497, and 512–554; these read QVHP…NPRG, STSG…TQPF, and EDGW…QAGS. Polar residues predominate over residues 354–379; it reads PASQETSLGQDTSDPASTRTGATASP. Phosphothreonine is present on Thr401. The segment covering 466–482 has biased composition (polar residues); the sequence is STSGLEDSCTETISSSG. Thr487 is subject to Phosphothreonine. Residues Ser527 and Ser546 each carry the phosphoserine modification. Positions 545–554 are enriched in polar residues; that stretch reads DSPQSVQAGS. Residues 561–625 form the KH domain; it reads LIIWEIEVPK…HHVDKALNLI (65 aa). Residues 712-771 form the Tudor domain; that stretch reads PVEITVICAAPGADGAWWRAQVVASYEETNEVEIRYVDYGGYKRVKVDVLRQIRSDFVTL.

As to quaternary structure, interacts with SLC8A3. Interacts with CFAP91. Interacts with CLPB. Interacts with NDUFS1. As to expression, highest expression in testis, heart, liver, skeletal muscle, intestine and kidney, followed by brain and lung. No expression in spleen. Isoform 1/D-AKAP1A is expressed predominantly in testis whereas isoform 4/D-AKAP1D is expressed primarily in liver. Expression is decreased in hearts of diabetic mice (at protein level).

It localises to the mitochondrion outer membrane. It is found in the mitochondrion. Its subcellular location is the endoplasmic reticulum. Differentially targeted protein that binds to type I and II regulatory subunits of protein kinase A. Anchors them to the cytoplasmic face of the mitochondrial outer membrane or allows them to reside in the endoplasmic reticulum. Involved in mitochondrial-mediated antiviral innate immunity. Promotes translocation of NDUFS1 into mitochondria to regulate mitochondrial membrane respiratory chain NADH dehydrogenase (Complex I) activity. Under diabetic conditions, myocardial AKAP1 expression decreases which blocks the translocation of NDUFS1 from the cytosol to mitochondria. Reduction of NDUFS1 in mitochondria decreases ATP production and increases mitochondrial ROS level, which causes mitochondrial dysfunction and cell apoptosis, respectively, thereby leading to cardiac dysfunction. The chain is A-kinase anchor protein 1, mitochondrial from Mus musculus (Mouse).